The primary structure comprises 99 residues: Acylphosphatase (99 aa).

Positions 5 to 97 constitute an Acylphosphatase-like domain; sequence IRQVMVRGRV…YAGERFSILS (93 aa). Residues arginine 20 and asparagine 38 contribute to the active site.

It belongs to the acylphosphatase family.

It carries out the reaction an acyl phosphate + H2O = a carboxylate + phosphate + H(+). The protein is Acylphosphatase (acyP) of Rhodopseudomonas palustris (strain BisB5).